The primary structure comprises 253 residues: MRNIRLRVEYDGTPYAGWQRQPGGIVTVQGELEACLSRILQERVNLAAAGRTDRGVHALGQVVNFQTASSLELQRIAHSLNCLLPDTIRVDCPQEVDMEFHARFSAAERQYRYFLMEEPSAVFGRFAGCSSRPLDLPLMHSLAVTLKGIHDFSAFSREDRDGTGSLCSVRMAGWYRHRGFLVFHIAANRFLRSMVRGLVGAMMDIGAGRLDPCSFKAMLDADAHARRVRPAAASGLFLSRVVYPDDYGCRKLR.

The Nucleophile role is filled by Asp53. Residue Tyr111 participates in substrate binding.

The protein belongs to the tRNA pseudouridine synthase TruA family. As to quaternary structure, homodimer.

The catalysed reaction is uridine(38/39/40) in tRNA = pseudouridine(38/39/40) in tRNA. In terms of biological role, formation of pseudouridine at positions 38, 39 and 40 in the anticodon stem and loop of transfer RNAs. The polypeptide is tRNA pseudouridine synthase A (Chlorobium luteolum (strain DSM 273 / BCRC 81028 / 2530) (Pelodictyon luteolum)).